We begin with the raw amino-acid sequence, 512 residues long: Chlorogenic acid esterase (512 aa).

A signal peptide spans M1–A18. 3 N-linked (GlcNAc...) asparagine glycosylation sites follow: N47, N80, and N98. The cysteines at positions 92 and 120 are disulfide-linked. S230 serves as the catalytic Acyl-ester intermediate. An N-linked (GlcNAc...) asparagine glycan is attached at N271. Residues C281 and C292 are joined by a disulfide bond. N-linked (GlcNAc...) asparagine glycans are attached at residues N295, N322, and N328. The active-site Charge relay system is the E351. N-linked (GlcNAc...) asparagine glycosylation is found at N391 and N402. H416 (charge relay system) is an active-site residue. N474 carries N-linked (GlcNAc...) asparagine glycosylation.

It belongs to the type-B carboxylesterase/lipase family.

The protein localises to the secreted. The catalysed reaction is chlorogenate + H2O = L-quinate + (E)-caffeate + H(+). In terms of biological role, extracellular chlorogenic acid esterase that releases caffeic acid from chlorogenic acid (CGA) contained in natural substrates such as apple marc and coffee pulp. Shows no activity towards 5-O-p-coumaroyl quinic acid, another quinic ester derivative, and rosmarinic acid, another caffeic ester derivative. This is Chlorogenic acid esterase from Aspergillus niger.